Reading from the N-terminus, the 255-residue chain is Myogenic factor 5 (255 aa).

A bHLH domain is found at 83–134; sequence DRRKAATMRERRRLKKVNQAFETLKRCTTTNPNQRLPKVEILRNAIRYIESL. The segment at 226-249 is disordered; it reads DTASLSPATSANSQPATPGPSSSR.

In terms of assembly, efficient DNA binding requires dimerization with another bHLH protein.

The protein localises to the nucleus. Its function is as follows. Acts as a transcriptional activator that promotes transcription of muscle-specific target genes and plays a role in muscle differentiation. Together with MYOG and MYOD1, co-occupies muscle-specific gene promoter core region during myogenesis. Induces fibroblasts to differentiate into myoblasts. Probable sequence specific DNA-binding protein. The protein is Myogenic factor 5 (Myf5) of Mus musculus (Mouse).